The sequence spans 558 residues: Dihydroxy-acid dehydratase (558 aa).

Asp78 serves as a coordination point for Mg(2+). Cys119 contacts [2Fe-2S] cluster. Mg(2+)-binding residues include Asp120 and Lys121. Lys121 carries the post-translational modification N6-carboxylysine. Cys192 is a binding site for [2Fe-2S] cluster. Residue Glu446 participates in Mg(2+) binding. Ser472 (proton acceptor) is an active-site residue.

The protein belongs to the IlvD/Edd family. In terms of assembly, homodimer. [2Fe-2S] cluster serves as cofactor. Mg(2+) is required as a cofactor.

It catalyses the reaction (2R)-2,3-dihydroxy-3-methylbutanoate = 3-methyl-2-oxobutanoate + H2O. The enzyme catalyses (2R,3R)-2,3-dihydroxy-3-methylpentanoate = (S)-3-methyl-2-oxopentanoate + H2O. It participates in amino-acid biosynthesis; L-isoleucine biosynthesis; L-isoleucine from 2-oxobutanoate: step 3/4. Its pathway is amino-acid biosynthesis; L-valine biosynthesis; L-valine from pyruvate: step 3/4. In terms of biological role, functions in the biosynthesis of branched-chain amino acids. Catalyzes the dehydration of (2R,3R)-2,3-dihydroxy-3-methylpentanoate (2,3-dihydroxy-3-methylvalerate) into 2-oxo-3-methylpentanoate (2-oxo-3-methylvalerate) and of (2R)-2,3-dihydroxy-3-methylbutanoate (2,3-dihydroxyisovalerate) into 2-oxo-3-methylbutanoate (2-oxoisovalerate), the penultimate precursor to L-isoleucine and L-valine, respectively. This chain is Dihydroxy-acid dehydratase, found in Campylobacter jejuni subsp. jejuni serotype O:23/36 (strain 81-176).